The chain runs to 572 residues: Sulfite reductase [NADPH] hemoprotein beta-component (572 aa).

Residues Cys437, Cys443, Cys482, and Cys486 each contribute to the [4Fe-4S] cluster site. Cys486 contributes to the siroheme binding site.

The protein belongs to the nitrite and sulfite reductase 4Fe-4S domain family. Alpha(8)-beta(8). The alpha component is a flavoprotein, the beta component is a hemoprotein. Requires siroheme as cofactor. [4Fe-4S] cluster is required as a cofactor.

The catalysed reaction is hydrogen sulfide + 3 NADP(+) + 3 H2O = sulfite + 3 NADPH + 4 H(+). It functions in the pathway sulfur metabolism; hydrogen sulfide biosynthesis; hydrogen sulfide from sulfite (NADPH route): step 1/1. Its function is as follows. Component of the sulfite reductase complex that catalyzes the 6-electron reduction of sulfite to sulfide. This is one of several activities required for the biosynthesis of L-cysteine from sulfate. The polypeptide is Sulfite reductase [NADPH] hemoprotein beta-component (Staphylococcus epidermidis (strain ATCC 35984 / DSM 28319 / BCRC 17069 / CCUG 31568 / BM 3577 / RP62A)).